The primary structure comprises 559 residues: Malate synthase, glyoxysomal (559 aa).

Arginine 173 (proton acceptor) is an active-site residue. Aspartate 459 serves as the catalytic Proton donor. Positions 557–559 match the Microbody targeting signal motif; it reads CKL.

It belongs to the malate synthase family.

Its subcellular location is the glyoxysome. The enzyme catalyses glyoxylate + acetyl-CoA + H2O = (S)-malate + CoA + H(+). It functions in the pathway carbohydrate metabolism; glyoxylate cycle; (S)-malate from isocitrate: step 2/2. In Zea mays (Maize), this protein is Malate synthase, glyoxysomal (LIP).